Here is a 244-residue protein sequence, read N- to C-terminus: Protein TIFY 10b (244 aa).

The region spanning 97 to 132 (QEPEKRQLTIFYGGKVLVFNDFPADKAKGLMQLASK) is the Tify domain. Residues 185–210 (PIARKASLHRFLEKRKDRLNAKTPYQ) carry the Jas motif. The Nuclear localization signal motif lies at 187–194 (ARKASLHR). The segment at 193–244 (HRFLEKRKDRLNAKTPYQASPSDATPVKKEPESQPWLGLGPNAVVKPIERGQ) is disordered. Basic and acidic residues predominate over residues 194–204 (RFLEKRKDRLN).

This sequence belongs to the TIFY/JAZ family. Post-translationally, ubiquitinated. Targeted for degradation by the SCF(COI1) E3 ubiquitin ligase-proteasome pathway during jasmonate signaling.

Its subcellular location is the nucleus. Functionally, repressor of jasmonate responses. The chain is Protein TIFY 10b from Oryza sativa subsp. indica (Rice).